The chain runs to 497 residues: MAYNKSLKSLVFILLASQIVFVLFLCYGKSSRELGVKWNSDIRSWMTSYVGFNGETAAISEEQLIWAEKIPDYNEEIVVRLHLEEENNLSDILQKAQSQNLDIWDYNFDHVDLRLKEENFDFWKSQYRSDILINNLTETLFESIVPDTTNSPFSTEAFLQAVENGHLNHEMFTSFTDIFFKSYQNLESINSWLRLMASLYKDLSELVPVGITAEGRTILGLKLNGRHPSDNGEKIRNKKVIIIQGGSHAREWIGIPSVCYAAWQLLAKYDSDGHVRKLLDKFEWIFIPVLNVDGYEYTWSNDRLWSKNRQPLNNSECFGINLDANWAFGFNGNIDPCSNEYGGLSPFQANETMALFNLITESLSQEQKKVVGFLDVHSYSQSVLWPYAYTCDLFPPDTENFEELAIGLVKELHRVNSRYYTYQQACIPYDGFHKHYLPGTAIDWVYFAADVAWPFNIRLRDMGDYGYLLPAKQIVPTAKEFFAMILYYGEFIAEYAF.

The signal sequence occupies residues 1 to 28 (MAYNKSLKSLVFILLASQIVFVLFLCYG). Positions 29–148 (KSSRELGVKW…TLFESIVPDT (120 aa)) are excised as a propeptide. Residues 182–492 (SYQNLESINS…AMILYYGEFI (311 aa)) enclose the Peptidase M14 domain. Residues histidine 248 and glutamate 251 each coordinate Zn(2+). Substrate contacts are provided by residues 248-251 (HARE) and 323-324 (DA). Cysteine 317 and cysteine 337 are joined by a disulfide. Zn(2+) is bound at residue histidine 377. Residue 378 to 379 (SY) participates in substrate binding.

This sequence belongs to the peptidase M14 family. Zn(2+) serves as cofactor.

It localises to the endoplasmic reticulum. The protein localises to the secreted. Inactive carboxypeptidase that may play a role in cell wall organization and biogenesis. The protein is Inactive metallocarboxypeptidase ecm14 of Schizosaccharomyces pombe (strain 972 / ATCC 24843) (Fission yeast).